The primary structure comprises 421 residues: Tyrosine--tRNA ligase (421 aa).

Position 35 (tyrosine 35) interacts with L-tyrosine. A 'HIGH' region motif is present at residues 40-49; sequence PTADSLHIGH. Positions 170 and 174 each coordinate L-tyrosine. Positions 232–236 match the 'KMSKS' region motif; the sequence is KFGKT. Lysine 235 contacts ATP. Residues 355 to 421 enclose the S4 RNA-binding domain; that stretch reads LSLVDVLVES…GKKKYFLITY (67 aa).

This sequence belongs to the class-I aminoacyl-tRNA synthetase family. TyrS type 1 subfamily. In terms of assembly, homodimer.

It is found in the cytoplasm. The catalysed reaction is tRNA(Tyr) + L-tyrosine + ATP = L-tyrosyl-tRNA(Tyr) + AMP + diphosphate + H(+). Functionally, catalyzes the attachment of tyrosine to tRNA(Tyr) in a two-step reaction: tyrosine is first activated by ATP to form Tyr-AMP and then transferred to the acceptor end of tRNA(Tyr). This Bacillus velezensis (strain DSM 23117 / BGSC 10A6 / LMG 26770 / FZB42) (Bacillus amyloliquefaciens subsp. plantarum) protein is Tyrosine--tRNA ligase.